Here is a 666-residue protein sequence, read N- to C-terminus: Endogenous retrovirus group K member 19 Gag polyprotein (666 aa).

Glycine 2 carries N-myristoyl glycine lipidation. Disordered regions lie at residues 170–189 and 223–264; these read LVGPSESKPRGTSRLPAGQV and PLES…GSEL. Positions 232-247 are enriched in pro residues; it reads GMPPAPQGRAPYPQPP. CCHC-type zinc fingers lie at residues 544–561 and 580–597; these read GKCYNCGQIGHLKKNCPV and DLCPRCKKGKHWASQCRS. The tract at residues 598-640 is disordered; it reads KFDKNGQPLSGNEQRGQPQAPQQTGAFPIQPFVPHGFQGQQPP. A compositionally biased stretch (polar residues) spans 604–622; the sequence is QPLSGNEQRGQPQAPQQTG.

This sequence belongs to the beta type-B retroviral Gag protein family. HERV class-II K(HML-2) gag subfamily. In terms of processing, myristoylation is essential for retroviral assembly. Alteration of the glycine residue leads to a block in the budding of particles and an accumulation of Gag inside the cell. Specific enzymatic cleavages may yield mature proteins.

The protein resides in the cell membrane. Functionally, the products of the Gag polyproteins of infectious retroviruses perform highly complex orchestrated tasks during the assembly, budding, maturation, and infection stages of the viral replication cycle. During viral assembly, the proteins form membrane associations and self-associations that ultimately result in budding of an immature virion from the infected cell. Gag precursors also function during viral assembly to selectively bind and package two plus strands of genomic RNA. Endogenous Gag proteins may have kept, lost or modified their original function during evolution. This Homo sapiens (Human) protein is Endogenous retrovirus group K member 19 Gag polyprotein (ERVK-19).